Here is a 985-residue protein sequence, read N- to C-terminus: DNA polymerase (985 aa).

Residues 936–972 (APSASDASGKRARKGAAPSDDESGSSEDEDAPCEPKC) are disordered. Positions 954 to 967 (SDDESGSSEDEDAP) are enriched in acidic residues.

The protein belongs to the DNA polymerase type-B family.

The enzyme catalyses DNA(n) + a 2'-deoxyribonucleoside 5'-triphosphate = DNA(n+1) + diphosphate. In terms of biological role, replicates the viral genome, host DNA polymerases cannot substitute for the viral enzyme in this process. This chain is DNA polymerase (POL), found in Orgyia pseudotsugata (Douglas-fir tussock moth).